A 679-amino-acid chain; its full sequence is UvrABC system protein B (679 aa).

Positions 25-412 (QGVNSGEEFQ…EGKFIEQVIR (388 aa)) constitute a Helicase ATP-binding domain. 38 to 45 (GATGTGKT) is a binding site for ATP. Positions 91–114 (YYDYYQPEAYVPVSDTYIAKTASI) match the Beta-hairpin motif. The region spanning 429–583 (QIDDLLSEIR…KKYNQINGIT (155 aa)) is the Helicase C-terminal domain. The 36-residue stretch at 639–674 (PSLIDKLENKMKDAAKELNFEEAANLRDRIKKLRQK) folds into the UVR domain.

Belongs to the UvrB family. As to quaternary structure, forms a heterotetramer with UvrA during the search for lesions. Interacts with UvrC in an incision complex.

The protein resides in the cytoplasm. Its function is as follows. The UvrABC repair system catalyzes the recognition and processing of DNA lesions. A damage recognition complex composed of 2 UvrA and 2 UvrB subunits scans DNA for abnormalities. Upon binding of the UvrA(2)B(2) complex to a putative damaged site, the DNA wraps around one UvrB monomer. DNA wrap is dependent on ATP binding by UvrB and probably causes local melting of the DNA helix, facilitating insertion of UvrB beta-hairpin between the DNA strands. Then UvrB probes one DNA strand for the presence of a lesion. If a lesion is found the UvrA subunits dissociate and the UvrB-DNA preincision complex is formed. This complex is subsequently bound by UvrC and the second UvrB is released. If no lesion is found, the DNA wraps around the other UvrB subunit that will check the other stand for damage. The chain is UvrABC system protein B from Prochlorococcus marinus subsp. pastoris (strain CCMP1986 / NIES-2087 / MED4).